A 149-amino-acid polypeptide reads, in one-letter code: 3-dehydroquinate dehydratase 2 (149 aa).

Tyr-24 serves as the catalytic Proton acceptor. Residues Asn-75, His-81, and Asp-88 each coordinate substrate. The Proton donor role is filled by His-101. Residues 102–103 and Arg-112 contribute to the substrate site; that span reads LS.

Belongs to the type-II 3-dehydroquinase family. In terms of assembly, homododecamer.

It catalyses the reaction 3-dehydroquinate = 3-dehydroshikimate + H2O. It functions in the pathway metabolic intermediate biosynthesis; chorismate biosynthesis; chorismate from D-erythrose 4-phosphate and phosphoenolpyruvate: step 3/7. Its function is as follows. Catalyzes a trans-dehydration via an enolate intermediate. This is 3-dehydroquinate dehydratase 2 (aroQ2) from Pseudomonas putida (strain ATCC 47054 / DSM 6125 / CFBP 8728 / NCIMB 11950 / KT2440).